A 504-amino-acid chain; its full sequence is Anaerobic nitric oxide reductase transcription regulator NorR (504 aa).

Asp57 carries the post-translational modification 4-aspartylphosphate. The region spanning 187-416 (MIGLSPGMTQ…LEHAIHRAVV (230 aa)) is the Sigma-54 factor interaction domain. ATP contacts are provided by residues 215–222 (GETGTGKE) and 278–287 (ADNGTLFLDE). The H-T-H motif DNA-binding region spans 479-498 (WAACARMLETDVANLHRLAK).

It participates in nitrogen metabolism; nitric oxide reduction. Its function is as follows. Required for the expression of anaerobic nitric oxide (NO) reductase, acts as a transcriptional activator for at least the norVW operon. Activation also requires sigma-54. In Escherichia coli O17:K52:H18 (strain UMN026 / ExPEC), this protein is Anaerobic nitric oxide reductase transcription regulator NorR.